The chain runs to 497 residues: Actin-binding protein WASF2 (497 aa).

Disordered regions lie at residues 173-203 (KEKR…KEEW) and 239-436 (ENVD…SDAR). Residues 252-263 (SDSASSPSPSFS) are compositionally biased toward low complexity. Composition is skewed to pro residues over residues 298 to 335 (SHPP…PPLP) and 343 to 403 (GTPP…PPLP). Residues 435–452 (ARSDLLSAIRQGFQLRRV) form the WH2 domain. Serine 473 is modified (phosphoserine).

Belongs to the SCAR/WAVE family. Binds actin and the Arp2/3 complex. Interacts with BAIAP2. Component of the WAVE2 complex composed of ABI1, CYFIP1/SRA1, NCKAP1/NAP1 (NCKAP1l/HEM1 in hematopoietic cells) and WASF2/WAVE2. Directly interacts with BRK1. Interacts with human cytomegalovirus protein UL135. Interacts with FNBP1L (via the SH3 domain).

It localises to the cytoplasm. The protein localises to the cytoskeleton. It is found in the cell projection. Its subcellular location is the lamellipodium. The protein resides in the basolateral cell membrane. In terms of biological role, downstream effector molecule involved in the transmission of signals from tyrosine kinase receptors and small GTPases to the actin cytoskeleton. Promotes formation of actin filaments. Part of the WAVE complex that regulates lamellipodia formation. The WAVE complex regulates actin filament reorganization via its interaction with the Arp2/3 complex. This chain is Actin-binding protein WASF2, found in Mus musculus (Mouse).